Here is a 330-residue protein sequence, read N- to C-terminus: Phenylalanine--tRNA ligase alpha subunit (330 aa).

Mg(2+) is bound at residue Glu-246.

This sequence belongs to the class-II aminoacyl-tRNA synthetase family. Phe-tRNA synthetase alpha subunit type 1 subfamily. Tetramer of two alpha and two beta subunits. The cofactor is Mg(2+).

It localises to the cytoplasm. The catalysed reaction is tRNA(Phe) + L-phenylalanine + ATP = L-phenylalanyl-tRNA(Phe) + AMP + diphosphate + H(+). The chain is Phenylalanine--tRNA ligase alpha subunit from Sulfurimonas denitrificans (strain ATCC 33889 / DSM 1251) (Thiomicrospira denitrificans (strain ATCC 33889 / DSM 1251)).